We begin with the raw amino-acid sequence, 285 residues long: 2,3,4,5-tetrahydropyridine-2,6-dicarboxylate N-succinyltransferase (285 aa).

This sequence belongs to the transferase hexapeptide repeat family.

The protein localises to the cytoplasm. It catalyses the reaction (S)-2,3,4,5-tetrahydrodipicolinate + succinyl-CoA + H2O = (S)-2-succinylamino-6-oxoheptanedioate + CoA. It participates in amino-acid biosynthesis; L-lysine biosynthesis via DAP pathway; LL-2,6-diaminopimelate from (S)-tetrahydrodipicolinate (succinylase route): step 1/3. The chain is 2,3,4,5-tetrahydropyridine-2,6-dicarboxylate N-succinyltransferase from Beijerinckia indica subsp. indica (strain ATCC 9039 / DSM 1715 / NCIMB 8712).